The primary structure comprises 387 residues: 3-ketoacyl-CoA thiolase (387 aa).

The active-site Acyl-thioester intermediate is the Cys-91. Catalysis depends on proton acceptor residues His-343 and Cys-373.

It belongs to the thiolase-like superfamily. Thiolase family. As to quaternary structure, heterotetramer of two alpha chains (FadB) and two beta chains (FadA).

It is found in the cytoplasm. It catalyses the reaction an acyl-CoA + acetyl-CoA = a 3-oxoacyl-CoA + CoA. Its pathway is lipid metabolism; fatty acid beta-oxidation. In terms of biological role, catalyzes the final step of fatty acid oxidation in which acetyl-CoA is released and the CoA ester of a fatty acid two carbons shorter is formed. This chain is 3-ketoacyl-CoA thiolase, found in Yersinia enterocolitica serotype O:8 / biotype 1B (strain NCTC 13174 / 8081).